An 89-amino-acid polypeptide reads, in one-letter code: Small ribosomal subunit protein uS15 (89 aa).

Belongs to the universal ribosomal protein uS15 family. In terms of assembly, part of the 30S ribosomal subunit. Forms a bridge to the 50S subunit in the 70S ribosome, contacting the 23S rRNA.

Its function is as follows. One of the primary rRNA binding proteins, it binds directly to 16S rRNA where it helps nucleate assembly of the platform of the 30S subunit by binding and bridging several RNA helices of the 16S rRNA. Forms an intersubunit bridge (bridge B4) with the 23S rRNA of the 50S subunit in the ribosome. The protein is Small ribosomal subunit protein uS15 of Sinorhizobium medicae (strain WSM419) (Ensifer medicae).